The chain runs to 522 residues: 2-isopropylmalate synthase (522 aa).

The region spanning 5 to 267 is the Pyruvate carboxyltransferase domain; sequence VIIFDTTLRD…ETGINAKEIH (263 aa). Mn(2+) is bound by residues aspartate 14, histidine 202, histidine 204, and asparagine 238. A regulatory domain region spans residues 392 to 522; that stretch reads QLQQLVVQSD…MQKNRELGGV (131 aa).

It belongs to the alpha-IPM synthase/homocitrate synthase family. LeuA type 1 subfamily. As to quaternary structure, homodimer. The cofactor is Mn(2+).

The protein resides in the cytoplasm. It catalyses the reaction 3-methyl-2-oxobutanoate + acetyl-CoA + H2O = (2S)-2-isopropylmalate + CoA + H(+). Its pathway is amino-acid biosynthesis; L-leucine biosynthesis; L-leucine from 3-methyl-2-oxobutanoate: step 1/4. Catalyzes the condensation of the acetyl group of acetyl-CoA with 3-methyl-2-oxobutanoate (2-ketoisovalerate) to form 3-carboxy-3-hydroxy-4-methylpentanoate (2-isopropylmalate). The chain is 2-isopropylmalate synthase from Shewanella baltica (strain OS155 / ATCC BAA-1091).